An 871-amino-acid polypeptide reads, in one-letter code: Exocyst complex component SEC10 (871 aa).

Positions 74–101 (IRTFESTLKELKNLNEETLNKRQYFSEQ) form a coiled coil. Residues Ser142, Ser485, and Ser507 each carry the phosphoserine modification.

This sequence belongs to the SEC10 family. In terms of assembly, the exocyst complex is composed of SEC3, SEC5, SEC6, SEC8, SEC10, SEC15, EXO70 and EXO84.

Its function is as follows. Component of the exocyst complex involved in the docking of exocytic vesicles with fusion sites on the plasma membrane. The polypeptide is Exocyst complex component SEC10 (SEC10) (Saccharomyces cerevisiae (strain ATCC 204508 / S288c) (Baker's yeast)).